A 295-amino-acid chain; its full sequence is Farnesyl diphosphate synthase (295 aa).

Isopentenyl diphosphate is bound by residues Lys-46, Arg-49, and His-78. Residues Asp-85 and Asp-91 each contribute to the Mg(2+) site. Arg-96 lines the (2E)-geranyl diphosphate pocket. Residue Arg-97 coordinates isopentenyl diphosphate. (2E)-geranyl diphosphate is bound by residues Lys-180, Thr-181, Gln-220, and Lys-237.

It belongs to the FPP/GGPP synthase family. Mg(2+) serves as cofactor.

It is found in the cytoplasm. The catalysed reaction is isopentenyl diphosphate + (2E)-geranyl diphosphate = (2E,6E)-farnesyl diphosphate + diphosphate. The chain is Farnesyl diphosphate synthase (ispA) from Haemophilus influenzae (strain ATCC 51907 / DSM 11121 / KW20 / Rd).